The following is a 362-amino-acid chain: tRNA-specific 2-thiouridylase MnmA (362 aa).

ATP contacts are provided by residues 13 to 20 (GLSGGVDS) and M39. Residues 99–101 (NPD) are interaction with target base in tRNA. Residue C104 is the Nucleophile of the active site. The cysteines at positions 104 and 200 are disulfide-linked. G128 provides a ligand contact to ATP. An interaction with tRNA region spans residues 150–152 (KDQ). Residue C200 is the Cysteine persulfide intermediate of the active site. The segment at 310–311 (RY) is interaction with tRNA.

This sequence belongs to the MnmA/TRMU family.

The protein localises to the cytoplasm. It catalyses the reaction S-sulfanyl-L-cysteinyl-[protein] + uridine(34) in tRNA + AH2 + ATP = 2-thiouridine(34) in tRNA + L-cysteinyl-[protein] + A + AMP + diphosphate + H(+). Catalyzes the 2-thiolation of uridine at the wobble position (U34) of tRNA, leading to the formation of s(2)U34. The polypeptide is tRNA-specific 2-thiouridylase MnmA (Vesicomyosocius okutanii subsp. Calyptogena okutanii (strain HA)).